The following is a 262-amino-acid chain: tRNA 4-demethylwyosine(37)-methyltransferase Taw21 (262 aa).

Residues His108, Phe125, 148 to 149 (DL), and 175 to 176 (DA) contribute to the S-adenosyl-L-methionine site.

The protein belongs to the class I-like SAM-binding methyltransferase superfamily. TRM5/TYW2 family.

The protein localises to the cytoplasm. The enzyme catalyses 4-demethylwyosine(37) in tRNA(Phe) + S-adenosyl-L-methionine = isowyosine(37) in tRNA(Phe) + S-adenosyl-L-homocysteine + H(+). In terms of biological role, catalyzes the C7-methylation of 4-demethylwyosine (imG-14) at position 37 in tRNA(Phe). The chain is tRNA 4-demethylwyosine(37)-methyltransferase Taw21 from Saccharolobus solfataricus (strain ATCC 35092 / DSM 1617 / JCM 11322 / P2) (Sulfolobus solfataricus).